The primary structure comprises 707 residues: Protein SGM1 (707 aa).

Over residues 1–11 the composition is skewed to basic and acidic residues; it reads MSKKLSLEERL. The segment at 1 to 52 is disordered; the sequence is MSKKLSLEERLSLATKKGRKKNKRSTSNLSSPSPVVLSNNEQESARTSIDDA. Serine 2 carries the N-acetylserine modification. The segment covering 27-40 has biased composition (low complexity); it reads SNLSSPSPVVLSNN. Positions 122 to 473 form a coiled coil; the sequence is VEELVKEISP…KPHQENSNEK (352 aa). Phosphoserine is present on residues serine 151, serine 538, serine 549, serine 568, serine 571, serine 576, and serine 589. A coiled-coil region spans residues 594-706; it reads SAHLVNKLST…QQMVEMQGKM (113 aa).

Belongs to the SGM1 family. Interacts with YPT6.

It localises to the golgi apparatus. In terms of biological role, required for normal growth rate on galactose and mannose. The protein is Protein SGM1 (SGM1) of Saccharomyces cerevisiae (strain ATCC 204508 / S288c) (Baker's yeast).